A 254-amino-acid polypeptide reads, in one-letter code: Major prion protein (254 aa).

The signal sequence occupies residues 1-28; sequence MANLGYWLLALFVTTCTDVGLCKKRPKP. Residues 23–38 are interaction with ADGRG6; that stretch reads KKRPKPGGWNTGGSRY. The tract at residues 23-231 is interaction with GRB2, ERI3 and SYN1; the sequence is KKRPKPGGWN…SQAYYDGRRS (209 aa). Positions 24-107 are disordered; it reads KRPKPGGWNT…QWNKPSKPKT (84 aa). A run of 5 repeats spans residues 51 to 59, 60 to 67, 68 to 75, 76 to 83, and 84 to 91. Positions 51–91 are 5 X 8 AA tandem repeats of P-H-G-G-G-W-G-Q; that stretch reads PQSGGTWGQPHGGGWGQPHGGGWGQPHGGGWGQPHGGGWSQ. Residues 55-95 are compositionally biased toward gly residues; the sequence is GTWGQPHGGGWGQPHGGGWGQPHGGGWGQPHGGGWSQGGGT. 12 residues coordinate Cu(2+): His61, Gly62, Gly63, His69, Gly70, Gly71, His77, Gly78, Gly79, His85, Gly86, and Gly87. Cys179 and Cys214 are joined by a disulfide. Asn181 and Asn197 each carry an N-linked (GlcNAc...) asparagine glycan. Ser231 carries the GPI-anchor amidated serine lipid modification. Residues 232–254 constitute a propeptide, removed in mature form; the sequence is SAVLFSSPPVILLISFLIFLIVG.

Belongs to the prion family. Monomer and homodimer. Has a tendency to aggregate into amyloid fibrils containing a cross-beta spine, formed by a steric zipper of superposed beta-strands. Soluble oligomers may represent an intermediate stage on the path to fibril formation. Copper binding may promote oligomerization. Interacts with GRB2, APP, ERI3/PRNPIP and SYN1. Mislocalized cytosolically exposed PrP interacts with MGRN1; this interaction alters MGRN1 subcellular location and causes lysosomal enlargement. Interacts with APP. Interacts with KIAA1191. Interacts with ADGRG6.

The protein localises to the cell membrane. The protein resides in the golgi apparatus. Functionally, its primary physiological function is unclear. May play a role in neuronal development and synaptic plasticity. May be required for neuronal myelin sheath maintenance. May promote myelin homeostasis through acting as an agonist for ADGRG6 receptor. May play a role in iron uptake and iron homeostasis. Soluble oligomers are toxic to cultured neuroblastoma cells and induce apoptosis (in vitro). Association with GPC1 (via its heparan sulfate chains) targets PRNP to lipid rafts. Also provides Cu(2+) or Zn(2+) for the ascorbate-mediated GPC1 deaminase degradation of its heparan sulfate side chains. This Rattus norvegicus (Rat) protein is Major prion protein (Prnp).